A 367-amino-acid chain; its full sequence is Dual-specificity RNA methyltransferase RlmN (367 aa).

Residue glutamate 91 is the Proton acceptor of the active site. The 236-residue stretch at 102–337 folds into the Radical SAM core domain; sequence GKVRMTQCLS…AIIRKSKGQD (236 aa). Cysteine 109 and cysteine 342 are disulfide-bonded. 3 residues coordinate [4Fe-4S] cluster: cysteine 116, cysteine 120, and cysteine 123. S-adenosyl-L-methionine is bound by residues 169 to 170, serine 201, 223 to 225, and asparagine 299; these read GE and SLH. Residue cysteine 342 is the S-methylcysteine intermediate of the active site.

The protein belongs to the radical SAM superfamily. RlmN family. The cofactor is [4Fe-4S] cluster.

The protein resides in the cytoplasm. It carries out the reaction adenosine(2503) in 23S rRNA + 2 reduced [2Fe-2S]-[ferredoxin] + 2 S-adenosyl-L-methionine = 2-methyladenosine(2503) in 23S rRNA + 5'-deoxyadenosine + L-methionine + 2 oxidized [2Fe-2S]-[ferredoxin] + S-adenosyl-L-homocysteine. The catalysed reaction is adenosine(37) in tRNA + 2 reduced [2Fe-2S]-[ferredoxin] + 2 S-adenosyl-L-methionine = 2-methyladenosine(37) in tRNA + 5'-deoxyadenosine + L-methionine + 2 oxidized [2Fe-2S]-[ferredoxin] + S-adenosyl-L-homocysteine. Functionally, specifically methylates position 2 of adenine 2503 in 23S rRNA and position 2 of adenine 37 in tRNAs. m2A2503 modification seems to play a crucial role in the proofreading step occurring at the peptidyl transferase center and thus would serve to optimize ribosomal fidelity. The protein is Dual-specificity RNA methyltransferase RlmN of Nitratidesulfovibrio vulgaris (strain DSM 19637 / Miyazaki F) (Desulfovibrio vulgaris).